Consider the following 345-residue polypeptide: Protein-arginine kinase (345 aa).

Residues 15-245 (LVISSRIRLA…LQIINQEIIS (231 aa)) enclose the Phosphagen kinase C-terminal domain. Residues 18–22 (SSRIR), His-82, Arg-116, 167–171 (RASVM), and 198–203 (RGLYGE) contribute to the ATP site. Positions 328–333 (RDFNRA) match the RDXXRA motif of the pArg binding pocket involved in allosteric regulation motif.

It belongs to the ATP:guanido phosphotransferase family.

It carries out the reaction L-arginyl-[protein] + ATP = N(omega)-phospho-L-arginyl-[protein] + ADP + H(+). Its activity is regulated as follows. Appears to be allosterically activated by the binding of pArg-containing polypeptides to the pArg-binding pocket localized in the C-terminal domain of McsB. Its function is as follows. Catalyzes the specific phosphorylation of arginine residues in proteins. The protein is Protein-arginine kinase of Clostridium kluyveri (strain NBRC 12016).